Here is a 698-residue protein sequence, read N- to C-terminus: Polyribonucleotide nucleotidyltransferase (698 aa).

Residues D485 and D491 each contribute to the Mg(2+) site. One can recognise a KH domain in the interval 552-611 (PRITTIKINPEKIRDVIGKGGAVIRALTEETGTTIELDDNGTVKIASSNGEATKEAIRRI). The region spanning 621 to 689 (GRIYNGKVIR…RQGRVRLSIK (69 aa)) is the S1 motif domain.

It belongs to the polyribonucleotide nucleotidyltransferase family. Component of the RNA degradosome, which is a multiprotein complex involved in RNA processing and mRNA degradation. It depends on Mg(2+) as a cofactor.

Its subcellular location is the cytoplasm. It catalyses the reaction RNA(n+1) + phosphate = RNA(n) + a ribonucleoside 5'-diphosphate. Functionally, involved in mRNA degradation. Catalyzes the phosphorolysis of single-stranded polyribonucleotides processively in the 3'- to 5'-direction. This Shewanella frigidimarina (strain NCIMB 400) protein is Polyribonucleotide nucleotidyltransferase.